A 433-amino-acid polypeptide reads, in one-letter code: Eukaryotic peptide chain release factor subunit 1 (433 aa).

The residue at position 182 (glutamine 182) is an N5-methylglutamine. Serine 425 is modified (phosphoserine).

This sequence belongs to the eukaryotic release factor 1 family. In terms of assembly, component of the eRF1-eRF3-GTP ternary complex, composed of sup45/eRF1, sup35/eRF3 and GTP.

The protein localises to the cytoplasm. Its function is as follows. Component of the eRF1-eRF3-GTP ternary complex, a ternary complex that mediates translation termination in response to the termination codons. The eRF1-eRF3-GTP complex binds to a stop codon in the ribosomal A-site. Sup45/eRF1 is responsible for stop codon recognition and inducing hydrolysis of peptidyl-tRNA. Following GTP hydrolysis by sup35/eRF3, sup35/eRF3 dissociates, permitting sup45/eRF1 to accommodate fully in the A-site. This is Eukaryotic peptide chain release factor subunit 1 (sup45) from Schizosaccharomyces pombe (strain 972 / ATCC 24843) (Fission yeast).